The sequence spans 132 residues: Fatty acid-binding protein 9 (132 aa).

A phosphoserine mark is found at Ser13, Ser14, Ser40, Ser42, Ser44, and Ser91.

It belongs to the calycin superfamily. Fatty-acid binding protein (FABP) family. In terms of tissue distribution, testis.

The protein localises to the cytoplasm. In Mus musculus (Mouse), this protein is Fatty acid-binding protein 9 (Fabp9).